Consider the following 216-residue polypeptide: N-(5'-phosphoribosyl)anthranilate isomerase (216 aa).

This sequence belongs to the TrpF family.

The catalysed reaction is N-(5-phospho-beta-D-ribosyl)anthranilate = 1-(2-carboxyphenylamino)-1-deoxy-D-ribulose 5-phosphate. Its pathway is amino-acid biosynthesis; L-tryptophan biosynthesis; L-tryptophan from chorismate: step 3/5. The chain is N-(5'-phosphoribosyl)anthranilate isomerase from Leptospira borgpetersenii serovar Hardjo-bovis (strain JB197).